The sequence spans 241 residues: Uridylate kinase (241 aa).

14–17 is a binding site for ATP; it reads KLSG. Residue G56 coordinates UMP. Residues G57 and R61 each coordinate ATP. UMP is bound by residues D77 and 138-145; that span reads TGNPFFTT. ATP-binding residues include T165, Y171, and D174.

It belongs to the UMP kinase family. Homohexamer.

The protein resides in the cytoplasm. The enzyme catalyses UMP + ATP = UDP + ADP. Its pathway is pyrimidine metabolism; CTP biosynthesis via de novo pathway; UDP from UMP (UMPK route): step 1/1. With respect to regulation, inhibited by UTP. In terms of biological role, catalyzes the reversible phosphorylation of UMP to UDP. This chain is Uridylate kinase, found in Psychrobacter arcticus (strain DSM 17307 / VKM B-2377 / 273-4).